A 353-amino-acid chain; its full sequence is Photosystem II D2 protein (353 aa).

Position 2 is an N-acetylthreonine (Thr-2). Position 2 is a phosphothreonine (Thr-2). A helical membrane pass occupies residues 41 to 61 (CAYFALGGWFTGTTFVTSWYT). His-118 is a binding site for chlorophyll a. The helical transmembrane segment at 125–141 (GFMLRQFELARSVQLRP) threads the bilayer. Pheophytin a is bound by residues Gln-130 and Asn-143. A helical membrane pass occupies residues 153–166 (VFVSVFLIYPLGQS). Position 198 (His-198) interacts with chlorophyll a. A helical membrane pass occupies residues 208–228 (AALLCAIHGATVENTLFEDGD). 2 residues coordinate a plastoquinone: His-215 and Phe-262. His-215 contacts Fe cation. A Fe cation-binding site is contributed by His-269. Residues 279 to 295 (GLWMSAIGVVGLALNLR) form a helical membrane-spanning segment.

The protein belongs to the reaction center PufL/M/PsbA/D family. In terms of assembly, PSII is composed of 1 copy each of membrane proteins PsbA, PsbB, PsbC, PsbD, PsbE, PsbF, PsbH, PsbI, PsbJ, PsbK, PsbL, PsbM, PsbT, PsbX, PsbY, PsbZ, Psb30/Ycf12, at least 3 peripheral proteins of the oxygen-evolving complex and a large number of cofactors. It forms dimeric complexes. The D1/D2 heterodimer binds P680, chlorophylls that are the primary electron donor of PSII, and subsequent electron acceptors. It shares a non-heme iron and each subunit binds pheophytin, quinone, additional chlorophylls, carotenoids and lipids. There is also a Cl(-1) ion associated with D1 and D2, which is required for oxygen evolution. The PSII complex binds additional chlorophylls, carotenoids and specific lipids. is required as a cofactor.

Its subcellular location is the plastid. It is found in the chloroplast thylakoid membrane. It catalyses the reaction 2 a plastoquinone + 4 hnu + 2 H2O = 2 a plastoquinol + O2. Photosystem II (PSII) is a light-driven water:plastoquinone oxidoreductase that uses light energy to abstract electrons from H(2)O, generating O(2) and a proton gradient subsequently used for ATP formation. It consists of a core antenna complex that captures photons, and an electron transfer chain that converts photonic excitation into a charge separation. The D1/D2 (PsbA/PsbD) reaction center heterodimer binds P680, the primary electron donor of PSII as well as several subsequent electron acceptors. D2 is needed for assembly of a stable PSII complex. This is Photosystem II D2 protein from Agrostis stolonifera (Creeping bentgrass).